A 114-amino-acid chain; its full sequence is Phosphorelay protein LuxU (114 aa).

An HPt domain is found at 19 to 114; that stretch reads GSDNVPVLLD…TRDAYRSWTN (96 aa). At His-58 the chain carries Phosphohistidine.

In terms of assembly, monomer.

In terms of biological role, phosphorelay protein which receives sensory signals from LuxN and LuxP and transmits them to LuxO, at low cell density. LuxN and LuxP transfer a phosphoryl group to LuxU on His-58 and this phosphoryl group is further transferred to LuxO. At high cell density, as LuxU could function to establish an equilibrium between the aspartyl-phosphate of LuxN and the aspartyl-phosphate of LuxO, LuxU transfers phosphate from LuxO to LuxN (and probably LuxP) and finally phosphate is drained from the system. The protein is Phosphorelay protein LuxU (luxU) of Vibrio harveyi (Beneckea harveyi).